We begin with the raw amino-acid sequence, 458 residues long: Glycine--tRNA ligase (458 aa).

Substrate contacts are provided by Arg-97 and Glu-171. Residues 203-205 (RNE), 213-218 (FRTREF), 287-288 (EL), and 331-334 (GADR) contribute to the ATP site. 218–222 (FEQME) is a substrate binding site. 327 to 331 (EPSLG) contacts substrate.

It belongs to the class-II aminoacyl-tRNA synthetase family. In terms of assembly, homodimer.

The protein localises to the cytoplasm. The catalysed reaction is tRNA(Gly) + glycine + ATP = glycyl-tRNA(Gly) + AMP + diphosphate. Catalyzes the attachment of glycine to tRNA(Gly). This chain is Glycine--tRNA ligase, found in Bacillus thuringiensis subsp. konkukian (strain 97-27).